The sequence spans 507 residues: Histidine ammonia-lyase (507 aa).

Positions 145–147 form a cross-link, 5-imidazolinone (Ala-Gly); the sequence is ASG. A 2,3-didehydroalanine (Ser) modification is found at Ser146.

The protein belongs to the PAL/histidase family. In terms of processing, contains an active site 4-methylidene-imidazol-5-one (MIO), which is formed autocatalytically by cyclization and dehydration of residues Ala-Ser-Gly.

The protein resides in the cytoplasm. The enzyme catalyses L-histidine = trans-urocanate + NH4(+). Its pathway is amino-acid degradation; L-histidine degradation into L-glutamate; N-formimidoyl-L-glutamate from L-histidine: step 1/3. The polypeptide is Histidine ammonia-lyase (Treponema denticola (strain ATCC 35405 / DSM 14222 / CIP 103919 / JCM 8153 / KCTC 15104)).